The sequence spans 241 residues: MLLNSLSTNFAALEVGQHLYWQIGNIRLHGQVFLTSWILLGSLLVFISLGTKKMENDPKGLQNLLEFLWDYIRDLARTQIGEKVYRDWMPFIGTLFLFVFVSNWGGALIPWRLIKLPSGELGAPTADINTTIALALLVSLSYFYAGLSNKGWRYFEYYVHPTPIMLPFKILEDFTKPLSLSFRLFGNILADELVVGVLVFLVPLVLPIPVMFLGLFTSAIQALIFATLAAYYIGEAVEEHH.

The next 5 helical transmembrane spans lie at 30–50 (GQVF…ISLG), 91–111 (FIGT…LIPW), 128–148 (INTT…AGLS), 193–213 (LVVG…VMFL), and 214–234 (GLFT…YYIG).

The protein belongs to the ATPase A chain family. F-type ATPases have 2 components, CF(1) - the catalytic core - and CF(0) - the membrane proton channel. CF(1) has five subunits: alpha(3), beta(3), gamma(1), delta(1), epsilon(1). CF(0) has four main subunits: a, b, b' and c.

The protein localises to the cellular thylakoid membrane. Its function is as follows. Key component of the proton channel; it plays a direct role in the translocation of protons across the membrane. The sequence is that of ATP synthase subunit a from Prochlorococcus marinus (strain MIT 9515).